Here is a 298-residue protein sequence, read N- to C-terminus: ATP synthase gamma chain (298 aa).

This sequence belongs to the ATPase gamma chain family. F-type ATPases have 2 components, CF(1) - the catalytic core - and CF(0) - the membrane proton channel. CF(1) has five subunits: alpha(3), beta(3), gamma(1), delta(1), epsilon(1). CF(0) has three main subunits: a, b and c.

The protein resides in the cell inner membrane. Its function is as follows. Produces ATP from ADP in the presence of a proton gradient across the membrane. The gamma chain is believed to be important in regulating ATPase activity and the flow of protons through the CF(0) complex. In Acidithiobacillus ferridurans, this protein is ATP synthase gamma chain.